The following is an 89-amino-acid chain: Small ribosomal subunit protein uS14 (89 aa).

This sequence belongs to the universal ribosomal protein uS14 family. Part of the 30S ribosomal subunit. Contacts proteins S3 and S10.

Its function is as follows. Binds 16S rRNA, required for the assembly of 30S particles and may also be responsible for determining the conformation of the 16S rRNA at the A site. The chain is Small ribosomal subunit protein uS14 from Oenococcus oeni (strain ATCC BAA-331 / PSU-1).